The following is a 335-amino-acid chain: Holliday junction branch migration complex subunit RuvB (335 aa).

Residues 2–184 are large ATPase domain (RuvB-L); that stretch reads ADERIVSAEN…FGIVEHMAYY (183 aa). ATP-binding positions include L23, R24, G65, K68, T69, T70, 131–133, R174, Y184, and R221; that span reads EDF. Residue T69 coordinates Mg(2+). The interval 185–255 is small ATPAse domain (RuvB-S); the sequence is TEADLMDIVQ…IADHALSQLQ (71 aa). Residues 258–335 form a head domain (RuvB-H) region; it reads IRGLDGVDRK…AHLGMPYPEK (78 aa). The DNA site is built by R313 and R318.

It belongs to the RuvB family. Homohexamer. Forms an RuvA(8)-RuvB(12)-Holliday junction (HJ) complex. HJ DNA is sandwiched between 2 RuvA tetramers; dsDNA enters through RuvA and exits via RuvB. An RuvB hexamer assembles on each DNA strand where it exits the tetramer. Each RuvB hexamer is contacted by two RuvA subunits (via domain III) on 2 adjacent RuvB subunits; this complex drives branch migration. In the full resolvosome a probable DNA-RuvA(4)-RuvB(12)-RuvC(2) complex forms which resolves the HJ.

It localises to the cytoplasm. It carries out the reaction ATP + H2O = ADP + phosphate + H(+). Its function is as follows. The RuvA-RuvB-RuvC complex processes Holliday junction (HJ) DNA during genetic recombination and DNA repair, while the RuvA-RuvB complex plays an important role in the rescue of blocked DNA replication forks via replication fork reversal (RFR). RuvA specifically binds to HJ cruciform DNA, conferring on it an open structure. The RuvB hexamer acts as an ATP-dependent pump, pulling dsDNA into and through the RuvAB complex. RuvB forms 2 homohexamers on either side of HJ DNA bound by 1 or 2 RuvA tetramers; 4 subunits per hexamer contact DNA at a time. Coordinated motions by a converter formed by DNA-disengaged RuvB subunits stimulates ATP hydrolysis and nucleotide exchange. Immobilization of the converter enables RuvB to convert the ATP-contained energy into a lever motion, pulling 2 nucleotides of DNA out of the RuvA tetramer per ATP hydrolyzed, thus driving DNA branch migration. The RuvB motors rotate together with the DNA substrate, which together with the progressing nucleotide cycle form the mechanistic basis for DNA recombination by continuous HJ branch migration. Branch migration allows RuvC to scan DNA until it finds its consensus sequence, where it cleaves and resolves cruciform DNA. The chain is Holliday junction branch migration complex subunit RuvB from Latilactobacillus sakei subsp. sakei (strain 23K) (Lactobacillus sakei subsp. sakei).